Here is a 319-residue protein sequence, read N- to C-terminus: Acetyl-coenzyme A carboxylase carboxyl transferase subunit alpha (319 aa).

Positions 32-293 constitute a CoA carboxyltransferase C-terminal domain; sequence NVDTEVRALE…KAVLLNELEA (262 aa).

The protein belongs to the AccA family. As to quaternary structure, acetyl-CoA carboxylase is a heterohexamer composed of biotin carboxyl carrier protein (AccB), biotin carboxylase (AccC) and two subunits each of ACCase subunit alpha (AccA) and ACCase subunit beta (AccD).

The protein resides in the cytoplasm. The enzyme catalyses N(6)-carboxybiotinyl-L-lysyl-[protein] + acetyl-CoA = N(6)-biotinyl-L-lysyl-[protein] + malonyl-CoA. It functions in the pathway lipid metabolism; malonyl-CoA biosynthesis; malonyl-CoA from acetyl-CoA: step 1/1. In terms of biological role, component of the acetyl coenzyme A carboxylase (ACC) complex. First, biotin carboxylase catalyzes the carboxylation of biotin on its carrier protein (BCCP) and then the CO(2) group is transferred by the carboxyltransferase to acetyl-CoA to form malonyl-CoA. In Xylella fastidiosa (strain 9a5c), this protein is Acetyl-coenzyme A carboxylase carboxyl transferase subunit alpha.